Consider the following 193-residue polypeptide: Regulator of free ubiquitin chains 1 (193 aa).

The protein belongs to the RFU1 family.

The protein localises to the endosome. Inhibitor of the DOA4 deubiquitinase involved in the regulation of protein degradation by the proteasome and maintenance of a normal level of free ubiquitin. This chain is Regulator of free ubiquitin chains 1 (RFU1), found in Eremothecium gossypii (strain ATCC 10895 / CBS 109.51 / FGSC 9923 / NRRL Y-1056) (Yeast).